We begin with the raw amino-acid sequence, 386 residues long: Outer membrane protein assembly factor BamB (386 aa).

Positions 1 to 25 (MMRNSRPGRAWRGAVVLTGLLALSG) are cleaved as a signal peptide. Cys-26 is lipidated: N-palmitoyl cysteine. Cys-26 carries S-diacylglycerol cysteine lipidation.

The protein belongs to the BamB family. As to quaternary structure, part of the Bam complex.

The protein resides in the cell outer membrane. In terms of biological role, part of the outer membrane protein assembly complex, which is involved in assembly and insertion of beta-barrel proteins into the outer membrane. This chain is Outer membrane protein assembly factor BamB, found in Bordetella pertussis (strain Tohama I / ATCC BAA-589 / NCTC 13251).